The primary structure comprises 686 residues: Glycine--tRNA ligase beta subunit (686 aa).

The protein belongs to the class-II aminoacyl-tRNA synthetase family. In terms of assembly, tetramer of two alpha and two beta subunits.

It is found in the cytoplasm. It catalyses the reaction tRNA(Gly) + glycine + ATP = glycyl-tRNA(Gly) + AMP + diphosphate. The protein is Glycine--tRNA ligase beta subunit of Halothermothrix orenii (strain H 168 / OCM 544 / DSM 9562).